Here is a 162-residue protein sequence, read N- to C-terminus: MHLTDLIEKTLTAMGYELVEVERAPAGLLRVYIDQAETGIVIEDCEKVSHQLTRVFEVENVNYERLEVSSPGLDRPLRTLVDFARFAGLEAKVTLRLPVNGQKNFTGIVQAPAGEPGQERIGLEFEGKDGPALLEFTLSELDRARLVPVLDFKGNRNKGNKQ.

The protein belongs to the RimP family.

The protein localises to the cytoplasm. Functionally, required for maturation of 30S ribosomal subunits. The polypeptide is Ribosome maturation factor RimP (Ralstonia nicotianae (strain ATCC BAA-1114 / GMI1000) (Ralstonia solanacearum)).